The following is a 520-amino-acid chain: Cytochrome P450 monooxygenase 98 (520 aa).

Residues 7–27 traverse the membrane as a helical segment; it reads MLNNNLLIVIGTFAVCVYIVL. A heme-binding site is contributed by Cys-445.

It belongs to the cytochrome P450 family. Heme is required as a cofactor.

It is found in the membrane. It participates in secondary metabolite biosynthesis. Cytochrome P450 monooxygenase that is able to use pyrene, phenanthrene, 3,5-dimethoxy-trans-stilbene and 3,5,4'-trimethoxy-trans-stilbene as substrates for oxidation. This chain is Cytochrome P450 monooxygenase 98, found in Postia placenta (strain ATCC 44394 / Madison 698-R) (Brown rot fungus).